The sequence spans 237 residues: Ras modification protein ERF4 (237 aa).

Belongs to the ERF4 family. Interacts with ERF2.

Its subcellular location is the endoplasmic reticulum membrane. In terms of biological role, the ERF2-SHR5 complex is a palmitoyltransferase specific for Ras proteins. Palmitoylates RAS2, which is required for its proper plasma membrane localization. The protein is Ras modification protein ERF4 (SHR5) of Saccharomyces cerevisiae (strain ATCC 204508 / S288c) (Baker's yeast).